Reading from the N-terminus, the 302-residue chain is Sulfate adenylyltransferase subunit 2 (302 aa).

The segment at 280 to 302 is disordered; the sequence is RQGRVIDHDQAGSMEQKKREGYF.

This sequence belongs to the PAPS reductase family. CysD subfamily. As to quaternary structure, heterodimer composed of CysD, the smaller subunit, and CysN.

It catalyses the reaction sulfate + ATP + H(+) = adenosine 5'-phosphosulfate + diphosphate. Its pathway is sulfur metabolism; hydrogen sulfide biosynthesis; sulfite from sulfate: step 1/3. Functionally, with CysN forms the ATP sulfurylase (ATPS) that catalyzes the adenylation of sulfate producing adenosine 5'-phosphosulfate (APS) and diphosphate, the first enzymatic step in sulfur assimilation pathway. APS synthesis involves the formation of a high-energy phosphoric-sulfuric acid anhydride bond driven by GTP hydrolysis by CysN coupled to ATP hydrolysis by CysD. The sequence is that of Sulfate adenylyltransferase subunit 2 from Hahella chejuensis (strain KCTC 2396).